Reading from the N-terminus, the 340-residue chain is MRAPGHAAIRWLFWMPLVCSVAMEQLQRDPTLDYHWDLWKKTHEKEYKDKNEEEVRRLIWEKNLKFIMIHNLEYSMGMHTYQVGMNDMGDMTNEEILCRMGALRIPRQSPKTVTFRSYSNRTLPDTVDWREKGCVTEVKYQGSCGACWAFSAVGALEGQLKLKTGKLISLSAQNLVDCSNEEKYGNKGCGGGYMTEAFQYIIDNGGIEADASYPYKATDEKCHYNSKNRAATCSRYIQLPFGDEDALKEAVATKGPVSVGIDASHSSFFFYKSGVYDDPSCTGNVNHGVLVVGYGTLDGKDYWLVKNSWGLNFGDQGYIRMARNNKNHCGIASYCSYPEI.

Residues 1-17 (MRAPGHAAIRWLFWMPL) form the signal peptide. Residues 18–122 (VCSVAMEQLQ…VTFRSYSNRT (105 aa)) constitute a propeptide, activation peptide. A glycan (N-linked (GlcNAc...) asparagine) is linked at asparagine 120. Cystine bridges form between cysteine 134–cysteine 233, cysteine 144–cysteine 189, cysteine 178–cysteine 222, and cysteine 281–cysteine 329. Residue cysteine 147 is part of the active site. Active-site residues include histidine 287 and asparagine 307.

Belongs to the peptidase C1 family. Widely expressed with highest expression found in non-skeletal tissues. Relatively high levels found in skeletal tissues. Expressed in spleen, B cells, dendritic cells and macrophages.

It is found in the lysosome. The protein localises to the secreted. Its subcellular location is the cytoplasmic vesicle. The protein resides in the phagosome. The catalysed reaction is Similar to cathepsin L, but with much less activity on Z-Phe-Arg-|-NHMec, and more activity on the Z-Val-Val-Arg-|-Xaa compound.. Functionally, thiol protease. Key protease responsible for the removal of the invariant chain from MHC class II molecules and MHC class II antigen presentation. The bond-specificity of this proteinase is in part similar to the specificities of cathepsin L. This chain is Cathepsin S (Ctss), found in Mus musculus (Mouse).